We begin with the raw amino-acid sequence, 356 residues long: Peptide chain release factor 1 (356 aa).

N5-methylglutamine is present on Q232.

The protein belongs to the prokaryotic/mitochondrial release factor family. Post-translationally, methylated by PrmC. Methylation increases the termination efficiency of RF1.

It localises to the cytoplasm. Peptide chain release factor 1 directs the termination of translation in response to the peptide chain termination codons UAG and UAA. This chain is Peptide chain release factor 1, found in Thermoanaerobacter pseudethanolicus (strain ATCC 33223 / 39E) (Clostridium thermohydrosulfuricum).